A 160-amino-acid chain; its full sequence is SsrA-binding protein (160 aa).

Belongs to the SmpB family.

The protein localises to the cytoplasm. In terms of biological role, required for rescue of stalled ribosomes mediated by trans-translation. Binds to transfer-messenger RNA (tmRNA), required for stable association of tmRNA with ribosomes. tmRNA and SmpB together mimic tRNA shape, replacing the anticodon stem-loop with SmpB. tmRNA is encoded by the ssrA gene; the 2 termini fold to resemble tRNA(Ala) and it encodes a 'tag peptide', a short internal open reading frame. During trans-translation Ala-aminoacylated tmRNA acts like a tRNA, entering the A-site of stalled ribosomes, displacing the stalled mRNA. The ribosome then switches to translate the ORF on the tmRNA; the nascent peptide is terminated with the 'tag peptide' encoded by the tmRNA and targeted for degradation. The ribosome is freed to recommence translation, which seems to be the essential function of trans-translation. The chain is SsrA-binding protein from Rhodospirillum rubrum (strain ATCC 11170 / ATH 1.1.1 / DSM 467 / LMG 4362 / NCIMB 8255 / S1).